The chain runs to 172 residues: Ribosome maturation factor RimM (172 aa).

Positions 96 to 169 constitute a PRC barrel domain; that stretch reads PDEFYDHQLE…AIEIDPPEGL (74 aa).

It belongs to the RimM family. Binds ribosomal protein uS19.

It is found in the cytoplasm. Its function is as follows. An accessory protein needed during the final step in the assembly of 30S ribosomal subunit, possibly for assembly of the head region. Essential for efficient processing of 16S rRNA. May be needed both before and after RbfA during the maturation of 16S rRNA. It has affinity for free ribosomal 30S subunits but not for 70S ribosomes. The chain is Ribosome maturation factor RimM from Mycolicibacterium vanbaalenii (strain DSM 7251 / JCM 13017 / BCRC 16820 / KCTC 9966 / NRRL B-24157 / PYR-1) (Mycobacterium vanbaalenii).